The chain runs to 285 residues: 2,4-didehydro-3-deoxy-L-rhamnonate hydrolase (285 aa).

L73 is a pyruvate binding site. Mg(2+) contacts are provided by E119, E121, and D150. Pyruvate-binding residues include K168 and T238.

This sequence belongs to the FAH family. In terms of assembly, homodimer. The cofactor is Mg(2+).

It catalyses the reaction 2,4-didehydro-3-deoxy-L-rhamnonate + H2O = (S)-lactate + pyruvate + H(+). It functions in the pathway carbohydrate degradation; L-rhamnose degradation. In terms of biological role, hydrolase that catalyzes the hydrolysis of 2,4-didehydro-3-deoxy-L-rhamnonate to pyruvate and L-lactate. Can also hydrolyze L-2,4-diketo-3-deoxylyxonate and L-2,4-diketo-3-deoxymannonate. In vitro can also use acylpyruvates such as acetylpyruvate and trimethylacetopyruvate. Catalyzes the fifth (last) step in an alternative pathway for rhamnose utilization that does not involve phosphorylated intermediates. This Sphingomonas sp. (strain SKA58) protein is 2,4-didehydro-3-deoxy-L-rhamnonate hydrolase.